Reading from the N-terminus, the 156-residue chain is ATP synthase subunit b (156 aa).

Residues 7-27 (IFFQMLVFFVLGWFTMKFVWP) form a helical membrane-spanning segment.

It belongs to the ATPase B chain family. As to quaternary structure, F-type ATPases have 2 components, F(1) - the catalytic core - and F(0) - the membrane proton channel. F(1) has five subunits: alpha(3), beta(3), gamma(1), delta(1), epsilon(1). F(0) has three main subunits: a(1), b(2) and c(10-14). The alpha and beta chains form an alternating ring which encloses part of the gamma chain. F(1) is attached to F(0) by a central stalk formed by the gamma and epsilon chains, while a peripheral stalk is formed by the delta and b chains.

It localises to the cell inner membrane. Its function is as follows. F(1)F(0) ATP synthase produces ATP from ADP in the presence of a proton or sodium gradient. F-type ATPases consist of two structural domains, F(1) containing the extramembraneous catalytic core and F(0) containing the membrane proton channel, linked together by a central stalk and a peripheral stalk. During catalysis, ATP synthesis in the catalytic domain of F(1) is coupled via a rotary mechanism of the central stalk subunits to proton translocation. Functionally, component of the F(0) channel, it forms part of the peripheral stalk, linking F(1) to F(0). This Bordetella pertussis (strain Tohama I / ATCC BAA-589 / NCTC 13251) protein is ATP synthase subunit b.